A 123-amino-acid polypeptide reads, in one-letter code: Transmembrane protein 254 (123 aa).

Ala2 carries the N-acetylalanine modification. Helical transmembrane passes span 15 to 35 (LFWF…VFWP), 61 to 81 (LCNG…YAIV), and 95 to 115 (LLWF…LIAY).

It localises to the membrane. The polypeptide is Transmembrane protein 254 (TMEM254) (Homo sapiens (Human)).